The sequence spans 275 residues: NAD kinase (275 aa).

Residue Asp-66 is the Proton acceptor of the active site. NAD(+) is bound by residues 66–67 (DG), His-71, 135–136 (NE), Lys-146, Arg-163, Asp-165, and 176–181 (TAYAMS).

It belongs to the NAD kinase family. A divalent metal cation is required as a cofactor.

The protein resides in the cytoplasm. The catalysed reaction is NAD(+) + ATP = ADP + NADP(+) + H(+). Involved in the regulation of the intracellular balance of NAD and NADP, and is a key enzyme in the biosynthesis of NADP. Catalyzes specifically the phosphorylation on 2'-hydroxyl of the adenosine moiety of NAD to yield NADP. This chain is NAD kinase, found in Methanosphaera stadtmanae (strain ATCC 43021 / DSM 3091 / JCM 11832 / MCB-3).